The primary structure comprises 301 residues: Cilia- and flagella-associated protein 161 (301 aa).

The disordered stretch occupies residues 269-301 (GNPRDASSSMLDLPKPPTEDTRAMEQAMGLDTQ).

As to quaternary structure, microtubule inner protein component of sperm flagellar doublet microtubules. In terms of tissue distribution, expressed in airway epithelial cells.

The protein resides in the cytoplasm. It localises to the cytoskeleton. Its subcellular location is the cilium axoneme. It is found in the flagellum axoneme. Functionally, microtubule inner protein (MIP) part of the dynein-decorated doublet microtubules (DMTs) in cilia axoneme, which is required for motile cilia beating. This is Cilia- and flagella-associated protein 161 from Homo sapiens (Human).